The following is a 406-amino-acid chain: Tyrosine--tRNA ligase (406 aa).

The short motif at 51–60 (PTAPDLHLGH) is the 'HIGH' region element. A 'KMSKS' region motif is present at residues 236-240 (KMSKS). An ATP-binding site is contributed by lysine 239. The S4 RNA-binding domain occupies 345-405 (IWICKAMVEG…GKRKFLRLIV (61 aa)).

The protein belongs to the class-I aminoacyl-tRNA synthetase family. TyrS type 2 subfamily. Homodimer.

The protein localises to the cytoplasm. The enzyme catalyses tRNA(Tyr) + L-tyrosine + ATP = L-tyrosyl-tRNA(Tyr) + AMP + diphosphate + H(+). Functionally, catalyzes the attachment of tyrosine to tRNA(Tyr) in a two-step reaction: tyrosine is first activated by ATP to form Tyr-AMP and then transferred to the acceptor end of tRNA(Tyr). The polypeptide is Tyrosine--tRNA ligase (Wolinella succinogenes (strain ATCC 29543 / DSM 1740 / CCUG 13145 / JCM 31913 / LMG 7466 / NCTC 11488 / FDC 602W) (Vibrio succinogenes)).